The sequence spans 515 residues: MDEFHRCGKEDSFWQQCFLYPLFFQEDLYAISHDHYLDVSSSSRPMEHLSSNDQLSFLTVKRLIGQIRQQNHSIVLFVNCDPNPLADRKKSFYSESVLEALTLVLEVPFSIWSKSSVEGMNECKSFRSIHSIFPFLEDKFPHSNSILDARIPYSIHPEILVRTFRRWIRDAPSLHPLRSVLYDYRNSPENLQRSIIVVPRVNTRFFLFLLNYYVCECESILFSRLKRSSHSRSLDHGSFPQRTHFHRKIKHIIIFSRRNSLKSIWSLKDPKIHYVRYGERPIIAIKGADLLVKKCRYYLLIFRQFYFHLWSEPYRVCSHQLSKNCSSSPGYFLRVRMNPLLVRTKTLDELFIPVLITNEMDPIVPIVPIIGLLATEKFCDISGRPISKLSWTSLTDDDILDRFDQIWRNLFHYYSGSFDRDGLYRIKYILLLSCAKTLACKHKSTIRVVRKELGPELFKKSFSKEREFDSLPFSSKAAARSQRERIWHSDIPQINPLANSWQKIQDLKIENLFDQ.

The protein belongs to the intron maturase 2 family. MatK subfamily.

The protein resides in the plastid. It is found in the chloroplast. Usually encoded in the trnK tRNA gene intron. Probably assists in splicing its own and other chloroplast group II introns. In Pinus densiflora (Japanese red pine), this protein is Maturase K.